We begin with the raw amino-acid sequence, 81 residues long: 2,3-bisphosphoglycerate-independent phosphoglycerate mutase (81 aa).

Residue S14 is the Phosphoserine intermediate of the active site. Residue S14 coordinates Mn(2+). A substrate-binding site is contributed by H75.

Belongs to the BPG-independent phosphoglycerate mutase family. Monomer. Mn(2+) serves as cofactor.

The catalysed reaction is (2R)-2-phosphoglycerate = (2R)-3-phosphoglycerate. It participates in carbohydrate degradation; glycolysis; pyruvate from D-glyceraldehyde 3-phosphate: step 3/5. In terms of biological role, catalyzes the interconversion of 2-phosphoglycerate and 3-phosphoglycerate. The sequence is that of 2,3-bisphosphoglycerate-independent phosphoglycerate mutase (gpmI) from Tomato big bud phytoplasma.